We begin with the raw amino-acid sequence, 112 residues long: Cytoplasmic envelopment protein 3 (112 aa).

G2 is lipidated: N-myristoyl glycine; by host. Positions G84–L112 are disordered.

It belongs to the herpesviridae cytoplasmic envelopment protein 3 family. As to quaternary structure, interacts with cytoplasmic envelopment protein 2; this interaction is essential for the proper localization of each protein to the assembly complex and thus for the production of infectious virus. Myristoylation and palmitoylation (probably on one or more of the nearby cysteines at the N-terminus) enable membrane-binding and Golgi apparatus-specific targeting and are essential for efficient packaging. Post-translationally, phosphorylated. Phosphorylation does not seem to be required for recycling to the host Golgi apparatus. Packaging is selective for underphosphorylated forms.

It is found in the virion tegument. The protein localises to the virion membrane. The protein resides in the host cell membrane. It localises to the host Golgi apparatus membrane. Its function is as follows. Plays an important role in the cytoplasmic envelopment of tegument proteins and capsids during the assembly and egress processes. Also participates in viral entry at the fusion step probably by regulating the core fusion machinery. This Murid herpesvirus 1 (strain K181) (MuHV-1) protein is Cytoplasmic envelopment protein 3 (UL99).